Reading from the N-terminus, the 105-residue chain is UPF0060 membrane protein Ajs_1326 (105 aa).

The next 4 helical transmembrane spans lie at 4-24, 30-50, 60-80, and 82-102; these read FALF…PYLW, SAWL…LLTL, AAYG…VDGI, and PTAW…LIMF.

The protein belongs to the UPF0060 family.

It localises to the cell inner membrane. The sequence is that of UPF0060 membrane protein Ajs_1326 from Acidovorax sp. (strain JS42).